A 130-amino-acid chain; its full sequence is Sirohydrochlorin cobaltochelatase (130 aa).

His12 serves as the catalytic Proton acceptor. His12 provides a ligand contact to Co(2+). Residue His12 coordinates Ni(2+). Substrate is bound by residues Glu48 and 73–78 (LASGVH). His78 is a Co(2+) binding site. His78 contacts Ni(2+).

Belongs to the CbiX family. CbiXS subfamily. Homotetramer; dimer of dimers.

The catalysed reaction is Co-sirohydrochlorin + 2 H(+) = sirohydrochlorin + Co(2+). It carries out the reaction Ni-sirohydrochlorin + 2 H(+) = sirohydrochlorin + Ni(2+). It functions in the pathway cofactor biosynthesis; adenosylcobalamin biosynthesis; cob(II)yrinate a,c-diamide from sirohydrochlorin (anaerobic route): step 1/10. In terms of biological role, catalyzes the insertion of Co(2+) into sirohydrochlorin as part of the anaerobic pathway to cobalamin biosynthesis. Involved in the biosynthesis of the unique nickel-containing tetrapyrrole coenzyme F430, the prosthetic group of methyl-coenzyme M reductase (MCR), which plays a key role in methanogenesis and anaerobic methane oxidation. Catalyzes the insertion of Ni(2+) into sirohydrochlorin to yield Ni-sirohydrochlorin. This Methanosarcina barkeri (strain Fusaro / DSM 804) protein is Sirohydrochlorin cobaltochelatase.